The chain runs to 198 residues: Putative manganese efflux pump MntP (198 aa).

Helical transmembrane passes span 3 to 23, 37 to 57, 65 to 85, 105 to 127, 131 to 153, and 171 to 191; these read SIELLIIAVGLSMDAFAVAIC, VLTGCFFGGFQALMPLLGYLL, ITSIDHWIAFGLLSLIGINMI, SLTVMAFATSIDALAIGVTFAFL, IIPAVTMIGITTFTFSFLGVKIG, and ILIGMGCKILFDHLGVISFVF.

It belongs to the MntP (TC 9.B.29) family.

It localises to the cell membrane. Probably functions as a manganese efflux pump. The protein is Putative manganese efflux pump MntP of Acetivibrio thermocellus (strain ATCC 27405 / DSM 1237 / JCM 9322 / NBRC 103400 / NCIMB 10682 / NRRL B-4536 / VPI 7372) (Clostridium thermocellum).